The chain runs to 108 residues: Ig kappa chain V-VI region NQ2-6.1 (108 aa).

The tract at residues 1-23 (QILLTQSPAIMSASPGQKVTMTC) is framework-1. The cysteines at positions 23 and 87 are disulfide-linked. Residues 24–33 (SASSSVSYMY) form a complementarity-determining-1 region. The framework-2 stretch occupies residues 34-48 (WYQQKPGSSPRLLIY). Residues 49–55 (DTSNLAS) are complementarity-determining-2. Residues 56–87 (GVPVRFSGSGSATSYSLTITRMQAEDAATYYC) are framework-3. Residues 88-98 (QQWSSYPPMLT) are complementarity-determining-3. Residues 99-108 (FGAGTKLELK) are framework-4.

This chain is Ig kappa chain V-VI region NQ2-6.1, found in Mus musculus (Mouse).